The primary structure comprises 88 residues: Small ribosomal subunit protein bS20 (88 aa).

A disordered region spans residues 1–23; sequence MANSPQAKKRARQNDKARAHNAS.

Belongs to the bacterial ribosomal protein bS20 family.

Its function is as follows. Binds directly to 16S ribosomal RNA. The sequence is that of Small ribosomal subunit protein bS20 from Teredinibacter turnerae (strain ATCC 39867 / T7901).